A 328-amino-acid chain; its full sequence is L-lactate dehydrogenase (328 aa).

NAD(+) is bound by residues Val-18, Glu-39, Lys-46, Tyr-71, and 85–86 (GA). Gln-88 and Arg-94 together coordinate substrate. Residues Ser-107, 124–126 (AAN), and Ser-149 contribute to the NAD(+) site. Residue 126–129 (NPVD) participates in substrate binding. 154–157 (DTAR) provides a ligand contact to substrate. Arg-159 and His-174 together coordinate beta-D-fructose 1,6-bisphosphate. The Proton acceptor role is filled by His-181. Residue Tyr-226 is modified to Phosphotyrosine. Thr-235 lines the substrate pocket.

The protein belongs to the LDH/MDH superfamily. LDH family. Homotetramer.

It is found in the cytoplasm. It carries out the reaction (S)-lactate + NAD(+) = pyruvate + NADH + H(+). Its pathway is fermentation; pyruvate fermentation to lactate; (S)-lactate from pyruvate: step 1/1. With respect to regulation, allosterically activated by fructose 1,6-bisphosphate (FBP). Catalyzes the conversion of lactate to pyruvate. This is L-lactate dehydrogenase from Streptococcus mutans serotype c (strain ATCC 700610 / UA159).